A 219-amino-acid chain; its full sequence is MGMSSLKLLKYVLFFFNLLFWICGCCILGFGIYLLIHNNFGVLFHNLPSLTLGNVFVIVGSIIMVVAFLGCMGSIKENKCLLMSFFILLLIILLAEVTLAILLFVYEQKLNEYVAKGLTDSIHRYHSDNSTKAAWDSIQSFLQCCGINGTSDWTSGPPASCPSDRKVEGCYAKARLWFHSNFLYIGIITICVCVIEVLGMSFALTLNCQIDKTSQTIGL.

The Cytoplasmic segment spans residues 1–11 (MGMSSLKLLKY). A helical transmembrane segment spans residues 12–32 (VLFFFNLLFWICGCCILGFGI). The Extracellular portion of the chain corresponds to 33-54 (YLLIHNNFGVLFHNLPSLTLGN). A helical transmembrane segment spans residues 55–69 (VFVIVGSIIMVVAFL). Residues 70–80 (GCMGSIKENKC) are Cytoplasmic-facing. A helical membrane pass occupies residues 81 to 106 (LLMSFFILLLIILLAEVTLAILLFVY). Residues 107 to 181 (EQKLNEYVAK…AKARLWFHSN (75 aa)) are Extracellular-facing. Residues Asn-129 and Asn-148 are each glycosylated (N-linked (GlcNAc...) asparagine). Residues 182–206 (FLYIGIITICVCVIEVLGMSFALTL) form a helical membrane-spanning segment. Topologically, residues 207–219 (NCQIDKTSQTIGL) are cytoplasmic.

Belongs to the tetraspanin (TM4SF) family. In terms of assembly, interacts with SCIMP. Interacts with CD45/PTPRC. Interacts with IL7R. Interacts with RBL2 and PPP2CA. As to expression, B-cells, monocytes, macrophages, neutrophils, single (CD4 or CD8) positive thymocytes and peripheral T-cells.

The protein resides in the cell membrane. It is found in the cell junction. It localises to the membrane. The protein localises to the synapse. In terms of biological role, structural component of specialized membrane microdomains known as tetraspanin-enriched microdomains (TERMs), which act as platforms for receptor clustering and signaling. Participates thereby in diverse biological functions such as cell signal transduction, adhesion, migration and protein trafficking. Plays a role in the activation of monocytes and B-cells. Acts as an essential regulator of B-cell development by promoting interleukin-7 receptor/IL7R signaling. Also promotes, in B-cells, the BCR signaling by recruiting PKC to the plasma membrane in order to phosphorylate its substrates. Plays an essential role in B- and T-cells homing to lymph nodes by stabilizing L-selectin/SELL cell surface expression. Also mediates metabolic and inflammatory functions in hepatocytes and adipose tissue by promoting TNF-alpha and LPS signaling independent of the immune compartment. The polypeptide is Leukocyte surface antigen CD53 (CD53) (Homo sapiens (Human)).